Consider the following 238-residue polypeptide: CS1 fimbrial subunit B (238 aa).

The first 17 residues, Met1–Ala17, serve as a signal peptide directing secretion.

It localises to the fimbrium. In terms of biological role, might function as a shuttle protein in the transport of fimbria through the periplasmic space or might function as an adhesin. The sequence is that of CS1 fimbrial subunit B (csoB) from Escherichia coli.